The primary structure comprises 232 residues: Large ribosomal subunit protein uL1 (232 aa).

This sequence belongs to the universal ribosomal protein uL1 family. As to quaternary structure, part of the 50S ribosomal subunit.

In terms of biological role, binds directly to 23S rRNA. The L1 stalk is quite mobile in the ribosome, and is involved in E site tRNA release. Its function is as follows. Protein L1 is also a translational repressor protein, it controls the translation of the L11 operon by binding to its mRNA. This chain is Large ribosomal subunit protein uL1, found in Clostridium novyi (strain NT).